Reading from the N-terminus, the 499-residue chain is Centrosomal protein of 57 kDa (499 aa).

Residues 1-16 are compositionally biased toward low complexity; the sequence is MAAASVSAASDSQFSS. Residues 1–41 are disordered; the sequence is MAAASVSAASDSQFSSVLAEPSRSNGNMVHHSSSPYVLYPP. Over residues 22–35 the composition is skewed to polar residues; the sequence is SRSNGNMVHHSSSP. Ser53 carries the post-translational modification Phosphoserine. Positions 58-239 are centrosome localization domain (CLD); that stretch reads TFAYPESNSR…RAAELQSGIE (182 aa). Residues 63 to 242 adopt a coiled-coil conformation; the sequence is ESNSRAIFSA…ELQSGIEANR (180 aa). 2 disordered regions span residues 255–275 and 424–476; these read TSTRKIKKKKSKPPEKKGFRN and LEKQ…SRKN. The tract at residues 278 to 490 is mediates interaction with microtubules; the sequence is GAQPHYRLCL…KDMQTLQNSL (213 aa). The stretch at 388-491 forms a coiled coil; the sequence is PSEELKDNLE…DMQTLQNSLQ (104 aa). The segment covering 427 to 443 has biased composition (basic and acidic residues); sequence QSTDKQKELKGNKKTLD. The span at 448-458 shows a compositional bias: low complexity; sequence SSSRSSVITRT. The segment covering 460–474 has biased composition (basic and acidic residues); it reads SKKDFTKQRPGEKSR.

Belongs to the translokin family. In terms of assembly, homodimer and homooligomer. Interacts with FGF2 and RAP80. Does not interact with FGF1 or FGF2 isoform 24 kDa. Interacts with microtubules. As to expression, ubiquitous (at protein level).

It is found in the nucleus. The protein localises to the cytoplasm. It localises to the cytoskeleton. The protein resides in the microtubule organizing center. Its subcellular location is the centrosome. Centrosomal protein which may be required for microtubule attachment to centrosomes. May act by forming ring-like structures around microtubules. Mediates nuclear translocation and mitogenic activity of the internalized growth factor FGF2. This is Centrosomal protein of 57 kDa (Cep57) from Rattus norvegicus (Rat).